Here is a 709-residue protein sequence, read N- to C-terminus: Phosphoribosylformylglycinamidine synthase subunit PurL (709 aa).

Histidine 36 is a catalytic residue. Tyrosine 39 and lysine 80 together coordinate ATP. Glutamate 82 is a Mg(2+) binding site. Residues 83 to 86 and arginine 105 each bind substrate; that span reads SHNH. Histidine 84 functions as the Proton acceptor in the catalytic mechanism. Position 106 (aspartate 106) interacts with Mg(2+). Position 226 (glutamine 226) interacts with substrate. Mg(2+) is bound at residue aspartate 252. 294–296 serves as a coordination point for substrate; that stretch reads ETQ. ATP contacts are provided by aspartate 470 and glycine 507. Serine 510 is a binding site for substrate.

The protein belongs to the FGAMS family. Monomer. Part of the FGAM synthase complex composed of 1 PurL, 1 PurQ and 2 PurS subunits.

Its subcellular location is the cytoplasm. The catalysed reaction is N(2)-formyl-N(1)-(5-phospho-beta-D-ribosyl)glycinamide + L-glutamine + ATP + H2O = 2-formamido-N(1)-(5-O-phospho-beta-D-ribosyl)acetamidine + L-glutamate + ADP + phosphate + H(+). Its pathway is purine metabolism; IMP biosynthesis via de novo pathway; 5-amino-1-(5-phospho-D-ribosyl)imidazole from N(2)-formyl-N(1)-(5-phospho-D-ribosyl)glycinamide: step 1/2. Part of the phosphoribosylformylglycinamidine synthase complex involved in the purines biosynthetic pathway. Catalyzes the ATP-dependent conversion of formylglycinamide ribonucleotide (FGAR) and glutamine to yield formylglycinamidine ribonucleotide (FGAM) and glutamate. The FGAM synthase complex is composed of three subunits. PurQ produces an ammonia molecule by converting glutamine to glutamate. PurL transfers the ammonia molecule to FGAR to form FGAM in an ATP-dependent manner. PurS interacts with PurQ and PurL and is thought to assist in the transfer of the ammonia molecule from PurQ to PurL. The polypeptide is Phosphoribosylformylglycinamidine synthase subunit PurL (Saccharolobus islandicus (strain Y.N.15.51 / Yellowstone #2) (Sulfolobus islandicus)).